Consider the following 395-residue polypeptide: Elongation factor Tu (395 aa).

The region spanning 10-204 (KPHLNIGTIG…AVDTWIELPE (195 aa)) is the tr-type G domain. A G1 region spans residues 19–26 (GHVDHGKT). Position 19–26 (19–26 (GHVDHGKT)) interacts with GTP. Position 26 (Thr26) interacts with Mg(2+). A G2 region spans residues 60 to 64 (GITIN). Positions 81 to 84 (DCPG) are G3. GTP is bound by residues 81–85 (DCPGH) and 136–139 (NKVD). The interval 136-139 (NKVD) is G4. The interval 174–176 (SAL) is G5.

It belongs to the TRAFAC class translation factor GTPase superfamily. Classic translation factor GTPase family. EF-Tu/EF-1A subfamily. Monomer.

The protein resides in the cytoplasm. The enzyme catalyses GTP + H2O = GDP + phosphate + H(+). GTP hydrolase that promotes the GTP-dependent binding of aminoacyl-tRNA to the A-site of ribosomes during protein biosynthesis. This chain is Elongation factor Tu, found in Christiangramia forsetii (strain DSM 17595 / CGMCC 1.15422 / KT0803) (Gramella forsetii).